The sequence spans 403 residues: Tryptophan synthase beta chain 1 (403 aa).

Lysine 93 bears the N6-(pyridoxal phosphate)lysine mark.

This sequence belongs to the TrpB family. Tetramer of two alpha and two beta chains. Pyridoxal 5'-phosphate is required as a cofactor.

The catalysed reaction is (1S,2R)-1-C-(indol-3-yl)glycerol 3-phosphate + L-serine = D-glyceraldehyde 3-phosphate + L-tryptophan + H2O. It participates in amino-acid biosynthesis; L-tryptophan biosynthesis; L-tryptophan from chorismate: step 5/5. Its function is as follows. The beta subunit is responsible for the synthesis of L-tryptophan from indole and L-serine. This is Tryptophan synthase beta chain 1 (trpB1) from Methanosarcina acetivorans (strain ATCC 35395 / DSM 2834 / JCM 12185 / C2A).